Here is a 226-residue protein sequence, read N- to C-terminus: uncharacterized protein (226 aa).

Transmembrane regions (helical) follow at residues 25–45 (ALAW…IFLI), 54–74 (FLLF…YFIF), 107–127 (ELFL…YFFI), and 153–173 (TITI…CFSS).

The protein localises to the cell membrane. This is an uncharacterized protein from Mycoplasma genitalium (strain ATCC 33530 / DSM 19775 / NCTC 10195 / G37) (Mycoplasmoides genitalium).